Here is a 262-residue protein sequence, read N- to C-terminus: Hydroxyethylthiazole kinase (262 aa).

A substrate-binding site is contributed by Met50. 2 residues coordinate ATP: Arg125 and Thr171. Residue Gly198 participates in substrate binding.

Belongs to the Thz kinase family. Mg(2+) serves as cofactor.

It catalyses the reaction 5-(2-hydroxyethyl)-4-methylthiazole + ATP = 4-methyl-5-(2-phosphooxyethyl)-thiazole + ADP + H(+). It participates in cofactor biosynthesis; thiamine diphosphate biosynthesis; 4-methyl-5-(2-phosphoethyl)-thiazole from 5-(2-hydroxyethyl)-4-methylthiazole: step 1/1. In terms of biological role, catalyzes the phosphorylation of the hydroxyl group of 4-methyl-5-beta-hydroxyethylthiazole (THZ). The sequence is that of Hydroxyethylthiazole kinase from Escherichia coli O157:H7.